The primary structure comprises 279 residues: Tryptophan 2,3-dioxygenase (279 aa).

Substrate contacts are provided by residues 48-52 (FIIQH), Tyr110, and Arg114. Residue His237 participates in heme binding. Thr251 is a binding site for substrate.

Belongs to the tryptophan 2,3-dioxygenase family. Homotetramer. Heme serves as cofactor.

It carries out the reaction L-tryptophan + O2 = N-formyl-L-kynurenine. It functions in the pathway amino-acid degradation; L-tryptophan degradation via kynurenine pathway; L-kynurenine from L-tryptophan: step 1/2. In terms of biological role, heme-dependent dioxygenase that catalyzes the oxidative cleavage of the L-tryptophan (L-Trp) pyrrole ring and converts L-tryptophan to N-formyl-L-kynurenine. Catalyzes the oxidative cleavage of the indole moiety. The protein is Tryptophan 2,3-dioxygenase of Bradyrhizobium diazoefficiens (strain JCM 10833 / BCRC 13528 / IAM 13628 / NBRC 14792 / USDA 110).